The sequence spans 547 residues: Chaperonin GroEL (547 aa).

ATP contacts are provided by residues 30–33, Lys51, 87–91, Gly415, 479–481, and Asp495; these read TLGP, DGTTT, and NAA. Residues 524 to 547 form a disordered region; sequence APKKDEPTPPAAGGGMGGMGGMDF. Over residues 535–547 the composition is skewed to gly residues; the sequence is AGGGMGGMGGMDF.

The protein belongs to the chaperonin (HSP60) family. As to quaternary structure, forms a cylinder of 14 subunits composed of two heptameric rings stacked back-to-back. Interacts with the co-chaperonin GroES.

Its subcellular location is the cytoplasm. The catalysed reaction is ATP + H2O + a folded polypeptide = ADP + phosphate + an unfolded polypeptide.. In terms of biological role, together with its co-chaperonin GroES, plays an essential role in assisting protein folding. The GroEL-GroES system forms a nano-cage that allows encapsulation of the non-native substrate proteins and provides a physical environment optimized to promote and accelerate protein folding. This Xylella fastidiosa (strain M23) protein is Chaperonin GroEL.